A 386-amino-acid polypeptide reads, in one-letter code: D-amino-acid oxidase (386 aa).

9 residues coordinate FAD: Gly14, Gly15, Val16, Val17, Glu39, Arg40, Ala51, Gly52, and Gly53. Positions 109–138 are disordered; it reads SSSPPHPLLPPWVDPSASAAPPRELGTPDT. Over residues 112-121 the composition is skewed to pro residues; it reads PPHPLLPPWV. Positions 174, 175, and 176 each coordinate FAD. D-serine is bound by residues Tyr253, Tyr261, and Lys332. D-proline-binding residues include Tyr261 and Lys332. The FAD site is built by Lys332, Gly344, Ile345, Gly362, and Ala364. Lys332 is a binding site for D-dopa. Gly362 contributes to the D-serine binding site. Gly362 provides a ligand contact to D-proline. Gly362 contributes to the D-dopa binding site.

This sequence belongs to the DAMOX/DASOX family.

It catalyses the reaction a D-alpha-amino acid + O2 + H2O = a 2-oxocarboxylate + H2O2 + NH4(+). It carries out the reaction D-alanine + O2 + H2O = pyruvate + H2O2 + NH4(+). The enzyme catalyses D-aspartate + O2 + H2O = oxaloacetate + H2O2 + NH4(+). Functionally, catalyzes the oxidative deamination of D-amino acids with broad substrate specificity. Enables the organism to utilize D-amino acids as a source of nutrients. In Zea mays (Maize), this protein is D-amino-acid oxidase.